The sequence spans 190 residues: Large ribosomal subunit protein bL25 (190 aa).

This sequence belongs to the bacterial ribosomal protein bL25 family. CTC subfamily. Part of the 50S ribosomal subunit; part of the 5S rRNA/L5/L18/L25 subcomplex. Contacts the 5S rRNA. Binds to the 5S rRNA independently of L5 and L18.

This is one of the proteins that binds to the 5S RNA in the ribosome where it forms part of the central protuberance. The sequence is that of Large ribosomal subunit protein bL25 from Neisseria gonorrhoeae (strain ATCC 700825 / FA 1090).